A 117-amino-acid chain; its full sequence is MKVLLWIGYVLSFGLLYLYLVKRAKRAALQLNNKLVESHTIPFAVRDFIAACGGRTNFVSLRTSPTQLIVSFAKPELVQIAALQKLGIKGINKSQNQYRFVLGNFVNQLKQQIENER.

The chain crosses the membrane as a helical span at residues 1 to 21; it reads MKVLLWIGYVLSFGLLYLYLV. The 76-residue stretch at 42 to 117 folds into the PTS EIIB type-1 domain; sequence PFAVRDFIAA…QLKQQIENER (76 aa).

The protein localises to the membrane. Its function is as follows. The phosphoenolpyruvate-dependent sugar phosphotransferase system (PTS), a major carbohydrate active -transport system, catalyzes the phosphorylation of incoming sugar substrates concomitant with their translocation across the cell membrane. The polypeptide is Putative phosphotransferase enzyme IIB component MPN_268 (Mycoplasma pneumoniae (strain ATCC 29342 / M129 / Subtype 1) (Mycoplasmoides pneumoniae)).